The chain runs to 352 residues: Putative formin-like protein 15b (352 aa).

The 350-residue stretch at 1–350 (MTLFNFIKLF…KDAKEAEMEK (350 aa)) folds into the FH2 domain.

Belongs to the formin-like family. Class-II subfamily.

This Arabidopsis thaliana (Mouse-ear cress) protein is Putative formin-like protein 15b (FH15B).